The following is a 505-amino-acid chain: Actin nucleation-promoting factor WASL (505 aa).

Residue Ser-2 is modified to N-acetylserine. The 108-residue stretch at 34–141 (LGKKCVTMSS…KAVTDLLGRR (108 aa)) folds into the WH1 domain. 2 disordered regions span residues 138-163 (LGRRQRKSEKRRDPPNGPNLPMATVD) and 184-205 (HTKEKKKGKAKKKRLTKADIGT). A compositionally biased stretch (basic residues) spans 186-198 (KEKKKGKAKKKRL). In terms of domain architecture, CRIB spans 203–216 (IGTPSNFQHIGHVG). Ser-242 is subject to Phosphoserine; by TNK2. A Phosphotyrosine; by FAK1 and TNK2 modification is found at Tyr-256. Residues 266–406 (EAVKNELRRQ…HQVPTTAGNK (141 aa)) form a disordered region. Pro residues-rich tracts occupy residues 276 to 364 (APPP…PPPS) and 371 to 391 (VAPPPPPPPPPPPGPPPPPGL). Arg-307 is subject to Omega-N-methylarginine. WH2 domains are found at residues 405–422 (NKAALLDQIREGAQLKKV) and 433–450 (GRDALLDQIRQGIQLKSV). The disordered stretch occupies residues 476 to 505 (QKRSKAIHSSDEDEDEDDEEDFEDDDEWED). Ser-484 and Ser-485 each carry phosphoserine. Positions 486–505 (DEDEDEDDEEDFEDDDEWED) are enriched in acidic residues.

Binds actin and the Arp2/3 complex. Interacts with CDC42. Interacts with FCHSD1. Interacts with FCHSD2. Binds to SH3 domains of GRB2. Interacts with the C-terminal SH3 domain of DNMBP. Interacts with SNX9. Interacts with the WW domains of PRPF40A/FBP11. Interacts with PTK2/FAK1. Interacts with PACSIN1, PACSIN2 and PACSIN3. Interacts with NOSTRIN. Binds to TNK2. Interacts with SNX33. Interacts with NONO (via second RRM domain); the interaction is direct. Component of a multiprotein complex with NONO and SFPQ; associates with the complex via direct interaction with NONO. As to quaternary structure, (Microbial infection) Interacts with E.coli effector protein EspF(U). Identified in a complex containing at least WASL, BAIAP2L1 and E.coli EspF(U). In terms of assembly, (Microbial infection) Interacts with Shigella flexneri protein IcsA. The interaction with IcsA enhances the affinity of WASL for Arp2/3, thus assembling a tight complex which has maximal activity in actin assembly. Post-translationally, phosphorylation at Ser-242, Tyr-256, Ser-484 and Ser-485 enhances actin polymerization activity.

Its subcellular location is the cytoplasm. The protein localises to the cytoskeleton. It is found in the nucleus. Functionally, regulates actin polymerization by stimulating the actin-nucleating activity of the Arp2/3 complex. Involved in various processes, such as mitosis and cytokinesis, via its role in the regulation of actin polymerization. Together with CDC42, involved in the extension and maintenance of the formation of thin, actin-rich surface projections called filopodia. In addition to its role in the cytoplasm, also plays a role in the nucleus by regulating gene transcription, probably by promoting nuclear actin polymerization. Binds to HSF1/HSTF1 and forms a complex on heat shock promoter elements (HSE) that negatively regulates HSP90 expression. Plays a role in dendrite spine morphogenesis. Decreasing levels of DNMBP (using antisense RNA) alters apical junction morphology in cultured enterocytes, junctions curve instead of being nearly linear. This chain is Actin nucleation-promoting factor WASL (WASL), found in Homo sapiens (Human).